A 108-amino-acid polypeptide reads, in one-letter code: U-scoloptoxin(10)-Sm1a (108 aa).

Positions 1 to 24 (MNKQWLHFFSVLLLCYVIEETCSL) are cleaved as a signal peptide.

Belongs to the scoloptoxin-10 family. Post-translationally, contains 3 disulfide bonds. Expressed by the venom gland.

The protein resides in the secreted. The protein is U-scoloptoxin(10)-Sm1a of Scolopendra morsitans (Tanzanian blue ringleg centipede).